Reading from the N-terminus, the 91-residue chain is ATP synthase subunit c (91 aa).

The next 2 membrane-spanning stretches (helical) occupy residues F4 to I24 and I53 to L73.

This sequence belongs to the ATPase C chain family. In terms of assembly, F-type ATPases have 2 components, F(1) - the catalytic core - and F(0) - the membrane proton channel. F(1) has five subunits: alpha(3), beta(3), gamma(1), delta(1), epsilon(1). F(0) has three main subunits: a(1), b(2) and c(10-14). The alpha and beta chains form an alternating ring which encloses part of the gamma chain. F(1) is attached to F(0) by a central stalk formed by the gamma and epsilon chains, while a peripheral stalk is formed by the delta and b chains.

Its subcellular location is the cell inner membrane. Functionally, f(1)F(0) ATP synthase produces ATP from ADP in the presence of a proton or sodium gradient. F-type ATPases consist of two structural domains, F(1) containing the extramembraneous catalytic core and F(0) containing the membrane proton channel, linked together by a central stalk and a peripheral stalk. During catalysis, ATP synthesis in the catalytic domain of F(1) is coupled via a rotary mechanism of the central stalk subunits to proton translocation. Key component of the F(0) channel; it plays a direct role in translocation across the membrane. A homomeric c-ring of between 10-14 subunits forms the central stalk rotor element with the F(1) delta and epsilon subunits. The protein is ATP synthase subunit c of Trichlorobacter lovleyi (strain ATCC BAA-1151 / DSM 17278 / SZ) (Geobacter lovleyi).